The chain runs to 177 residues: Dual-action ribosomal maturation protein DarP (177 aa).

It belongs to the DarP family.

It localises to the cytoplasm. Functionally, member of a network of 50S ribosomal subunit biogenesis factors which assembles along the 30S-50S interface, preventing incorrect 23S rRNA structures from forming. Promotes peptidyl transferase center (PTC) maturation. The sequence is that of Dual-action ribosomal maturation protein DarP from Histophilus somni (strain 2336) (Haemophilus somnus).